A 304-amino-acid polypeptide reads, in one-letter code: N-acetyl-D-glucosamine kinase (304 aa).

ATP is bound by residues 4-11 (GFDIGGTK) and 133-140 (GFGGGLIF). H157, C178, C180, and C185 together coordinate Zn(2+).

Belongs to the ROK (NagC/XylR) family. NagK subfamily.

The enzyme catalyses N-acetyl-D-glucosamine + ATP = N-acetyl-D-glucosamine 6-phosphate + ADP + H(+). Its pathway is cell wall biogenesis; peptidoglycan recycling. Its function is as follows. Catalyzes the phosphorylation of N-acetyl-D-glucosamine (GlcNAc) derived from cell-wall degradation, yielding GlcNAc-6-P. This Mannheimia succiniciproducens (strain KCTC 0769BP / MBEL55E) protein is N-acetyl-D-glucosamine kinase.